The primary structure comprises 348 residues: Centromere protein N-A (348 aa).

The protein belongs to the CENP-N/CHL4 family.

It localises to the nucleus. The protein localises to the chromosome. Its subcellular location is the centromere. Functionally, probable component of a centromeric complex involved in assembly of kinetochore proteins, mitotic progression and chromosome segregation. This chain is Centromere protein N-A (cenpn-a), found in Xenopus laevis (African clawed frog).